A 190-amino-acid polypeptide reads, in one-letter code: Dynactin subunit 6 (190 aa).

The residue at position 186 (T186) is a Phosphothreonine; by CDK1.

Belongs to the dynactin subunits 5/6 family. Dynactin subunit 6 subfamily. Subunit of dynactin, a multiprotein complex part of a tripartite complex with dynein and a adapter, such as BICDL1, BICD2 or HOOK3. The dynactin complex is built around ACTR1A/ACTB filament and consists of an actin-related filament composed of a shoulder domain, a pointed end and a barbed end. Its length is defined by its flexible shoulder domain. The soulder is composed of 2 DCTN1 subunits, 4 DCTN2 and 2 DCTN3. The 4 DCNT2 (via N-terminus) bind the ACTR1A filament and act as molecular rulers to determine the length. The pointed end is important for binding dynein-dynactin cargo adapters. Consists of 4 subunits: ACTR10, DCNT4, DCTN5 and DCTN6. Within the complex DCTN6 forms a heterodimer with DCTN5. The barbed end is composed of a CAPZA1:CAPZB heterodimers, which binds ACTR1A/ACTB filament and dynactin and stabilizes dynactin. Interacts with PLK1. Interacts with N4BP2L1. Phosphorylation at Thr-186 by CDK1 during mitotic prometaphase creates a binding site for PLK1 that facilitates its recruitment to kinetochores. Ubiquitous.

It is found in the cytoplasm. The protein localises to the cytoskeleton. Its subcellular location is the chromosome. It localises to the centromere. The protein resides in the kinetochore. Its function is as follows. Part of the dynactin complex that activates the molecular motor dynein for ultra-processive transport along microtubules. The polypeptide is Dynactin subunit 6 (Homo sapiens (Human)).